Here is a 129-residue protein sequence, read N- to C-terminus: Small ribosomal subunit protein uS11 (129 aa).

Belongs to the universal ribosomal protein uS11 family. In terms of assembly, part of the 30S ribosomal subunit. Interacts with proteins S7 and S18. Binds to IF-3.

Functionally, located on the platform of the 30S subunit, it bridges several disparate RNA helices of the 16S rRNA. Forms part of the Shine-Dalgarno cleft in the 70S ribosome. The polypeptide is Small ribosomal subunit protein uS11 (Phocaeicola vulgatus (strain ATCC 8482 / DSM 1447 / JCM 5826 / CCUG 4940 / NBRC 14291 / NCTC 11154) (Bacteroides vulgatus)).